Reading from the N-terminus, the 67-residue chain is DNA-directed RNA polymerase subunit omega (67 aa).

This sequence belongs to the RNA polymerase subunit omega family. The RNAP catalytic core consists of 2 alpha, 1 beta, 1 beta' and 1 omega subunit. When a sigma factor is associated with the core the holoenzyme is formed, which can initiate transcription.

The enzyme catalyses RNA(n) + a ribonucleoside 5'-triphosphate = RNA(n+1) + diphosphate. Functionally, promotes RNA polymerase assembly. Latches the N- and C-terminal regions of the beta' subunit thereby facilitating its interaction with the beta and alpha subunits. This Variovorax paradoxus (strain S110) protein is DNA-directed RNA polymerase subunit omega.